The chain runs to 238 residues: Probable transcriptional regulatory protein SAK_1658 (238 aa).

This sequence belongs to the TACO1 family. YeeN subfamily.

It localises to the cytoplasm. The chain is Probable transcriptional regulatory protein SAK_1658 from Streptococcus agalactiae serotype Ia (strain ATCC 27591 / A909 / CDC SS700).